Consider the following 589-residue polypeptide: Aspartate--tRNA(Asp/Asn) ligase (589 aa).

Glu176 lines the L-aspartate pocket. An aspartate region spans residues 200-203 (QLFK). Residue Arg222 coordinates L-aspartate. ATP is bound by residues 222 to 224 (RDE) and Gln231. His450 lines the L-aspartate pocket. Glu484 provides a ligand contact to ATP. Residue Arg491 participates in L-aspartate binding. 536-539 (GLDR) contacts ATP.

The protein belongs to the class-II aminoacyl-tRNA synthetase family. Type 1 subfamily. In terms of assembly, homodimer.

It localises to the cytoplasm. It carries out the reaction tRNA(Asx) + L-aspartate + ATP = L-aspartyl-tRNA(Asx) + AMP + diphosphate. In terms of biological role, aspartyl-tRNA synthetase with relaxed tRNA specificity since it is able to aspartylate not only its cognate tRNA(Asp) but also tRNA(Asn). Reaction proceeds in two steps: L-aspartate is first activated by ATP to form Asp-AMP and then transferred to the acceptor end of tRNA(Asp/Asn). The protein is Aspartate--tRNA(Asp/Asn) ligase of Bacillus cytotoxicus (strain DSM 22905 / CIP 110041 / 391-98 / NVH 391-98).